Reading from the N-terminus, the 398-residue chain is S-adenosylmethionine synthase (398 aa).

His-16 contacts ATP. Residue Asp-18 coordinates Mg(2+). K(+) is bound at residue Glu-51. Residues Glu-64 and Gln-108 each coordinate L-methionine. The interval 108 to 118 (QSADIAQGVDA) is flexible loop. Residues 176 to 178 (DSK), 242 to 243 (KF), Asp-251, 257 to 258 (RK), Ala-274, and Lys-278 contribute to the ATP site. Asp-251 lines the L-methionine pocket. L-methionine is bound at residue Lys-282.

Belongs to the AdoMet synthase family. In terms of assembly, homotetramer; dimer of dimers. The cofactor is Mg(2+). Requires K(+) as cofactor.

The protein localises to the cytoplasm. It catalyses the reaction L-methionine + ATP + H2O = S-adenosyl-L-methionine + phosphate + diphosphate. The protein operates within amino-acid biosynthesis; S-adenosyl-L-methionine biosynthesis; S-adenosyl-L-methionine from L-methionine: step 1/1. In terms of biological role, catalyzes the formation of S-adenosylmethionine (AdoMet) from methionine and ATP. The overall synthetic reaction is composed of two sequential steps, AdoMet formation and the subsequent tripolyphosphate hydrolysis which occurs prior to release of AdoMet from the enzyme. The sequence is that of S-adenosylmethionine synthase from Nitrobacter hamburgensis (strain DSM 10229 / NCIMB 13809 / X14).